The following is a 302-amino-acid chain: Sulfate adenylyltransferase subunit 2 (302 aa).

The protein belongs to the PAPS reductase family. CysD subfamily. Heterodimer composed of CysD, the smaller subunit, and CysN.

The catalysed reaction is sulfate + ATP + H(+) = adenosine 5'-phosphosulfate + diphosphate. The protein operates within sulfur metabolism; hydrogen sulfide biosynthesis; sulfite from sulfate: step 1/3. Its function is as follows. With CysN forms the ATP sulfurylase (ATPS) that catalyzes the adenylation of sulfate producing adenosine 5'-phosphosulfate (APS) and diphosphate, the first enzymatic step in sulfur assimilation pathway. APS synthesis involves the formation of a high-energy phosphoric-sulfuric acid anhydride bond driven by GTP hydrolysis by CysN coupled to ATP hydrolysis by CysD. This Escherichia coli O157:H7 (strain EC4115 / EHEC) protein is Sulfate adenylyltransferase subunit 2.